A 491-amino-acid chain; its full sequence is N-succinylglutamate 5-semialdehyde dehydrogenase (491 aa).

Position 223-228 (223-228 (GSANTG)) interacts with NAD(+). Residues Glu246 and Cys280 contribute to the active site.

It belongs to the aldehyde dehydrogenase family. AstD subfamily.

It catalyses the reaction N-succinyl-L-glutamate 5-semialdehyde + NAD(+) + H2O = N-succinyl-L-glutamate + NADH + 2 H(+). It functions in the pathway amino-acid degradation; L-arginine degradation via AST pathway; L-glutamate and succinate from L-arginine: step 4/5. Its function is as follows. Catalyzes the NAD-dependent reduction of succinylglutamate semialdehyde into succinylglutamate. In Photorhabdus laumondii subsp. laumondii (strain DSM 15139 / CIP 105565 / TT01) (Photorhabdus luminescens subsp. laumondii), this protein is N-succinylglutamate 5-semialdehyde dehydrogenase.